Here is a 118-residue protein sequence, read N- to C-terminus: Small ribosomal subunit protein uS13 (118 aa).

Residues 94–118 form a disordered region; sequence GLPVHGQRTKTNARTRKGPAKSITR.

This sequence belongs to the universal ribosomal protein uS13 family. In terms of assembly, part of the 30S ribosomal subunit. Forms a loose heterodimer with protein S19. Forms two bridges to the 50S subunit in the 70S ribosome.

In terms of biological role, located at the top of the head of the 30S subunit, it contacts several helices of the 16S rRNA. In the 70S ribosome it contacts the 23S rRNA (bridge B1a) and protein L5 of the 50S subunit (bridge B1b), connecting the 2 subunits; these bridges are implicated in subunit movement. Contacts the tRNAs in the A and P-sites. In Acidithiobacillus ferrooxidans (strain ATCC 23270 / DSM 14882 / CIP 104768 / NCIMB 8455) (Ferrobacillus ferrooxidans (strain ATCC 23270)), this protein is Small ribosomal subunit protein uS13.